The primary structure comprises 255 residues: 5'-nucleotidase SurE (255 aa).

Residues Asp8, Asp9, Ser39, and Asn91 each coordinate a divalent metal cation.

Belongs to the SurE nucleotidase family. The cofactor is a divalent metal cation.

It is found in the cytoplasm. It catalyses the reaction a ribonucleoside 5'-phosphate + H2O = a ribonucleoside + phosphate. Nucleotidase that shows phosphatase activity on nucleoside 5'-monophosphates. This is 5'-nucleotidase SurE from Acinetobacter baumannii (strain SDF).